A 119-amino-acid polypeptide reads, in one-letter code: MKTNYSNLETQALAKHIRISASKVRRVINEIRGRLYEQAPMILEFMLYRACYPVSQLLSLAAANASHNLGLNKADSVTSEVKVDEGTMLKRFEPRAQGRGYPIHKPTSHITIVIKKKST.

Belongs to the universal ribosomal protein uL22 family. In terms of assembly, part of the 50S ribosomal subunit.

The protein resides in the plastid. It localises to the chloroplast. Its function is as follows. This protein binds specifically to 23S rRNA. The globular domain of the protein is located near the polypeptide exit tunnel on the outside of the subunit, while an extended beta-hairpin is found that lines the wall of the exit tunnel in the center of the 70S ribosome. This chain is Large ribosomal subunit protein uL22c (rpl22), found in Anthoceros angustus (Hornwort).